A 324-amino-acid chain; its full sequence is MIDKNQTCGVGQDSVPYMICLIHILEEWFGVEQLEDYLNFANYLLWVFTPLILLILPYFTIFLLYLTIIFLHIYKRKNVLKEAYSHNLWDGARKTVATLWDGHAAVWHGYEVHGMEKIPEDGPALIIFYHGAIPIDFYYFMAKIFIHKGRTCRVVADHFVFKIPGFSLLLDVFCALHGPREKCVEILRSGHLLAISPGGVREALISDETYNIVWGHRRGFAQVAIDAKVPIIPMFTQNIREGFRSLGGTRLFRWLYEKFRYPFAPMYGGFPVKLRTYLGDPIPYDPQITAEELAEKTKNAVQALIDKHQRIPGNIMSALLERFH.

The Lumenal segment spans residues Met-1 to Pro-50. An N-linked (GlcNAc...) asparagine glycan is attached at Asn-5. Residues Leu-51 to Leu-71 form a helical membrane-spanning segment. Over His-72–Leu-125 the chain is Cytoplasmic. A helical membrane pass occupies residues Ile-126 to Ile-146. His-130 is an active-site residue. Topologically, residues His-147–His-324 are lumenal.

This sequence belongs to the diacylglycerol acyltransferase family. Highly divergent.

It localises to the endoplasmic reticulum membrane. It carries out the reaction a 1,2-diacylglycerol + a 1,2-diacyl-sn-glycero-3-phosphocholine = a triacylglycerol + a 1-acyl-sn-glycero-3-phosphocholine. The catalysed reaction is a 1-O-alkyl-2-acyl-sn-glycero-3-phosphocholine + a 1,2-diacylglycerol = a 1-O-alkyl-sn-glycero-3-phosphocholine + a triacylglycerol. It catalyses the reaction a 2-acylglycerol + an acyl-CoA = a 1,2-diacylglycerol + CoA. The enzyme catalyses an acyl-CoA + a 1,2-diacyl-sn-glycerol = a triacyl-sn-glycerol + CoA. It carries out the reaction 2-(9Z-octadecenoyl)-glycerol + (9Z)-octadecenoyl-CoA = 1,2-di-(9Z-octadecenoyl)-glycerol + CoA. The catalysed reaction is 1,2-di-(9Z-octadecenoyl)-sn-glycerol + (9Z)-octadecenoyl-CoA = 1,2,3-tri-(9Z-octadecenoyl)-glycerol + CoA. Its activity is regulated as follows. Acyltransferase activity is specifically inhibited by TMX1 at the endoplasmic reticulum, restricting accumulation of triacylglycerol. Catalytic subunit of the alternative triglyceride biosynthesis pathway, which mediates formation of triacylglycerol from diacylglycerol and membrane phospholipids. Synthesizes triacylglycerol at the expense of membrane phospholipids, such as phosphatidylcholine (PC) and its ether-linked form (ePC), thereby altering the composition of membranes. The alternative triglyceride biosynthesis pathway is probably required to provide the energy required for rapid growth when fuel sources are limiting. It maintains mitochondrial function during periods of extracellular lipid starvation. Can also use acyl-CoA as donor: acts as a acyl-CoA:monoacylglycerol acyltransferase (MGAT), but also shows acyl-CoA:diacylglycerol acyltransferase (DGAT) activity. In Homo sapiens (Human), this protein is DGAT1/2-independent enzyme synthesizing storage lipids.